We begin with the raw amino-acid sequence, 389 residues long: E3 ubiquitin-protein ligase E3D (389 aa).

At A2 the chain carries N-acetylalanine. Residues 129–159 (PLPSENWGALVGEWCCHPDPFANKSLHPQEN) carry the BRAT1-like motif motif. C144 lines the Zn(2+) pocket. Residues 235–257 (QSSERSFPIIPRSWFVQSVIAQC) are interaction with UBE2C. The segment at 353–389 (LPSATCLELLLILSKSNANLPSSLRRVNSFQVAFLKM) is HECT-like.

As to quaternary structure, interacts with UBE2C/UbcH10 (E2 ubiquitin-conjugating enzyme). In vitro, interacts with cyclin-B. In terms of processing, ubiquitinated by UBCH10 (E2 ubiquitin-conjugating enzyme).

The protein localises to the cytoplasm. The enzyme catalyses S-ubiquitinyl-[E2 ubiquitin-conjugating enzyme]-L-cysteine + [acceptor protein]-L-lysine = [E2 ubiquitin-conjugating enzyme]-L-cysteine + N(6)-ubiquitinyl-[acceptor protein]-L-lysine.. It functions in the pathway protein modification; protein ubiquitination. Its function is as follows. E3 ubiquitin-protein ligase which accepts ubiquitin from specific E2 ubiquitin-conjugating enzymes, and transfers it to substrates, generally promoting their degradation by the proteasome. Independently of its E3 ubiquitin-protein ligase activity, acts as an inhibitor of CPSF3 endonuclease activity by blocking CPSF3 active site. This Homo sapiens (Human) protein is E3 ubiquitin-protein ligase E3D (UBE3D).